Here is a 304-residue protein sequence, read N- to C-terminus: Porphobilinogen deaminase (304 aa).

Cys240 is subject to S-(dipyrrolylmethanemethyl)cysteine.

Belongs to the HMBS family. Monomer. Dipyrromethane serves as cofactor.

It catalyses the reaction 4 porphobilinogen + H2O = hydroxymethylbilane + 4 NH4(+). It functions in the pathway porphyrin-containing compound metabolism; protoporphyrin-IX biosynthesis; coproporphyrinogen-III from 5-aminolevulinate: step 2/4. In terms of biological role, tetrapolymerization of the monopyrrole PBG into the hydroxymethylbilane pre-uroporphyrinogen in several discrete steps. The sequence is that of Porphobilinogen deaminase from Xanthomonas oryzae pv. oryzae (strain MAFF 311018).